The following is a 60-amino-acid chain: Small ribosomal subunit protein bS21 (60 aa).

The interval 35–60 (REHYEKPSVKRKKKSEAARRRKSKVR) is disordered. The span at 43–60 (VKRKKKSEAARRRKSKVR) shows a compositional bias: basic residues.

The protein belongs to the bacterial ribosomal protein bS21 family.

This is Small ribosomal subunit protein bS21 from Clostridium novyi (strain NT).